We begin with the raw amino-acid sequence, 357 residues long: Histidine biosynthesis bifunctional protein HisB (357 aa).

The histidinol-phosphatase stretch occupies residues Met-1–Pro-168. Residue Asp-8 is the Nucleophile of the active site. The Mg(2+) site is built by Asp-8, Asp-10, and Asp-128. The Proton donor role is filled by Asp-10. Residues Arg-169 to Leu-357 form an imidazoleglycerol-phosphate dehydratase region.

The protein in the N-terminal section; belongs to the histidinol-phosphatase family. It in the C-terminal section; belongs to the imidazoleglycerol-phosphate dehydratase family. Mg(2+) is required as a cofactor.

The protein resides in the cytoplasm. The enzyme catalyses D-erythro-1-(imidazol-4-yl)glycerol 3-phosphate = 3-(imidazol-4-yl)-2-oxopropyl phosphate + H2O. The catalysed reaction is L-histidinol phosphate + H2O = L-histidinol + phosphate. Its pathway is amino-acid biosynthesis; L-histidine biosynthesis; L-histidine from 5-phospho-alpha-D-ribose 1-diphosphate: step 6/9. It participates in amino-acid biosynthesis; L-histidine biosynthesis; L-histidine from 5-phospho-alpha-D-ribose 1-diphosphate: step 8/9. The chain is Histidine biosynthesis bifunctional protein HisB from Stenotrophomonas maltophilia (strain R551-3).